The primary structure comprises 201 residues: LexA repressor (201 aa).

Positions 28 to 48 (LREIAAQLGISGTLGVMKHLE) form a DNA-binding region, H-T-H motif. Residues Ser120 and Lys157 each act as for autocatalytic cleavage activity in the active site.

The protein belongs to the peptidase S24 family. Homodimer.

The catalysed reaction is Hydrolysis of Ala-|-Gly bond in repressor LexA.. In terms of biological role, represses a number of genes involved in the response to DNA damage (SOS response), including recA and lexA. In the presence of single-stranded DNA, RecA interacts with LexA causing an autocatalytic cleavage which disrupts the DNA-binding part of LexA, leading to derepression of the SOS regulon and eventually DNA repair. The sequence is that of LexA repressor from Citrifermentans bemidjiense (strain ATCC BAA-1014 / DSM 16622 / JCM 12645 / Bem) (Geobacter bemidjiensis).